The sequence spans 466 residues: Adenosylhomocysteinase (466 aa).

The substrate site is built by threonine 57, aspartate 132, and glutamate 192. An NAD(+)-binding site is contributed by 193–195 (TTT). Lysine 222 and aspartate 226 together coordinate substrate. Residues asparagine 227, 256–261 (GYGDVG), glutamate 279, asparagine 314, 335–337 (IGH), and asparagine 380 contribute to the NAD(+) site.

The protein belongs to the adenosylhomocysteinase family. It depends on NAD(+) as a cofactor.

Its subcellular location is the cytoplasm. It carries out the reaction S-adenosyl-L-homocysteine + H2O = L-homocysteine + adenosine. The protein operates within amino-acid biosynthesis; L-homocysteine biosynthesis; L-homocysteine from S-adenosyl-L-homocysteine: step 1/1. In terms of biological role, may play a key role in the regulation of the intracellular concentration of adenosylhomocysteine. The protein is Adenosylhomocysteinase of Rhizobium rhizogenes (strain K84 / ATCC BAA-868) (Agrobacterium radiobacter).